A 152-amino-acid polypeptide reads, in one-letter code: Putative pre-16S rRNA nuclease (152 aa).

It belongs to the YqgF nuclease family.

It localises to the cytoplasm. In terms of biological role, could be a nuclease involved in processing of the 5'-end of pre-16S rRNA. The polypeptide is Putative pre-16S rRNA nuclease (Nitrosococcus oceani (strain ATCC 19707 / BCRC 17464 / JCM 30415 / NCIMB 11848 / C-107)).